The primary structure comprises 137 residues: MSNNQDRPGQITDESLRERLSPEAYAVTRRAGTEPPFSGRYYDHHETGIYHCICCDAPLFSSEHKFDSGSGWPSYWQPVSGDALSVVRDTSHGMIREEVRCARCDAHLGHVFPDGPPPTGLRYCINSLSLDFKAAHK.

The tract at residues methionine 1–threonine 33 is disordered. One can recognise a MsrB domain in the interval aspartate 13–alanine 135. Zn(2+) is bound by residues cysteine 52, cysteine 55, cysteine 101, and cysteine 104. The Nucleophile role is filled by cysteine 124.

This sequence belongs to the MsrB Met sulfoxide reductase family. Zn(2+) serves as cofactor.

The enzyme catalyses L-methionyl-[protein] + [thioredoxin]-disulfide + H2O = L-methionyl-(R)-S-oxide-[protein] + [thioredoxin]-dithiol. The protein is Peptide methionine sulfoxide reductase MsrB of Thioalkalivibrio sulfidiphilus (strain HL-EbGR7).